We begin with the raw amino-acid sequence, 162 residues long: NADH-quinone oxidoreductase subunit I 2 (162 aa).

4Fe-4S ferredoxin-type domains are found at residues 53-83 (LRRY…IDSE) and 93-122 (TRYD…ETRI). [4Fe-4S] cluster is bound by residues Cys-63, Cys-66, Cys-69, Cys-73, Cys-102, Cys-105, Cys-108, and Cys-112.

It belongs to the complex I 23 kDa subunit family. In terms of assembly, NDH-1 is composed of 14 different subunits. Subunits NuoA, H, J, K, L, M, N constitute the membrane sector of the complex. It depends on [4Fe-4S] cluster as a cofactor.

It localises to the cell inner membrane. It carries out the reaction a quinone + NADH + 5 H(+)(in) = a quinol + NAD(+) + 4 H(+)(out). Functionally, NDH-1 shuttles electrons from NADH, via FMN and iron-sulfur (Fe-S) centers, to quinones in the respiratory chain. The immediate electron acceptor for the enzyme in this species is believed to be ubiquinone. Couples the redox reaction to proton translocation (for every two electrons transferred, four hydrogen ions are translocated across the cytoplasmic membrane), and thus conserves the redox energy in a proton gradient. In Nitrosococcus oceani (strain ATCC 19707 / BCRC 17464 / JCM 30415 / NCIMB 11848 / C-107), this protein is NADH-quinone oxidoreductase subunit I 2.